A 309-amino-acid chain; its full sequence is UDP-N-acetylenolpyruvoylglucosamine reductase (309 aa).

In terms of domain architecture, FAD-binding PCMH-type spans 34-221; sequence RVGGPAQVLF…TAAREAAQPI (188 aa). The active site involves Arg-179. Ser-228 serves as the catalytic Proton donor. Residue Glu-298 is part of the active site.

Belongs to the MurB family. It depends on FAD as a cofactor.

The protein resides in the cytoplasm. It catalyses the reaction UDP-N-acetyl-alpha-D-muramate + NADP(+) = UDP-N-acetyl-3-O-(1-carboxyvinyl)-alpha-D-glucosamine + NADPH + H(+). Its pathway is cell wall biogenesis; peptidoglycan biosynthesis. Its function is as follows. Cell wall formation. This chain is UDP-N-acetylenolpyruvoylglucosamine reductase, found in Methylorubrum extorquens (strain CM4 / NCIMB 13688) (Methylobacterium extorquens).